Here is a 236-residue protein sequence, read N- to C-terminus: Endonuclease NucS (236 aa).

The protein belongs to the NucS endonuclease family.

It localises to the cytoplasm. In terms of biological role, cleaves both 3' and 5' ssDNA extremities of branched DNA structures. This is Endonuclease NucS from Saccharolobus solfataricus (strain ATCC 35092 / DSM 1617 / JCM 11322 / P2) (Sulfolobus solfataricus).